Consider the following 414-residue polypeptide: Enterobactin exporter EntS (414 aa).

The Cytoplasmic portion of the chain corresponds to 1–21 (MNRQSWLLNLSLLKTHPAFRA). The helical transmembrane segment at 22–42 (VFLARFISIVSLGLLGVAVPV) threads the bilayer. Over 43–55 (QIQMMTHSTWQVG) the chain is Periplasmic. Residues 56 to 76 (LSVTLTGGAMFIGLMVGGVLA) form a helical membrane-spanning segment. Over 77-83 (DRYERKK) the chain is Cytoplasmic. The helical transmembrane segment at 84–104 (VILLARGTCGIGFIGLCVNAL) threads the bilayer. Topologically, residues 105 to 109 (LPEPS) are periplasmic. The helical transmembrane segment at 110 to 130 (LLAIYLLGLWDGFFASLGVTA) threads the bilayer. The Cytoplasmic portion of the chain corresponds to 131-156 (LLAATPALVGRENLMQAGAITMLTVR). Residues 157 to 177 (LGSVISPMLGGILLASGGVAW) traverse the membrane as a helical segment. A topological domain (periplasmic) is located at residue N178. Residues 179 to 199 (YGLAAAGTFITLLPLLTLPRL) form a helical membrane-spanning segment. Residues 200–218 (PVPPQPRENPFLALLAAFR) are Cytoplasmic-facing. The helical transmembrane segment at 219-239 (FLLACPLIGGIALLGGLVTMA) threads the bilayer. Topologically, residues 240–256 (SAVRVLYPALAMSWQMS) are periplasmic. The chain crosses the membrane as a helical span at residues 257–277 (AAQIGLLYAAIPLGAAIGALT). Over 278 to 287 (SGQLAHSVRP) the chain is Cytoplasmic. A helical membrane pass occupies residues 288–307 (GLIMLVSTVGSFLAVGLFAI). Over 308 to 313 (MPVWIA) the chain is Periplasmic. Residues 314–336 (GVICLALFGWLSAISSLLQYTLL) traverse the membrane as a helical segment. The Cytoplasmic portion of the chain corresponds to 337–356 (QTQTPENMLGRMNGLWTAQN). A helical transmembrane segment spans residues 357–377 (VTGDAIGAALLGGLGAMMTPV). Position 378 (A378) is a topological domain, periplasmic. A helical transmembrane segment spans residues 379 to 399 (SASVSGFGLVIIGLLLLLVLG). Residues 400–414 (ELRRFRQTSPVSDAG) lie on the Cytoplasmic side of the membrane.

This sequence belongs to the major facilitator superfamily. EntS (TC 2.A.1.38) family.

It is found in the cell inner membrane. In terms of biological role, component of an export pathway for enterobactin. This is Enterobactin exporter EntS from Salmonella paratyphi A (strain ATCC 9150 / SARB42).